Consider the following 20-residue polypeptide: 21 kDa cold shock-induced protein (20 aa).

Basic and acidic residues predominate over residues 1-12 (TDSIKETIKETV). A disordered region spans residues 1-20 (TDSIKETIKETVNHQAEWPY).

This Streptococcus thermophilus protein is 21 kDa cold shock-induced protein.